A 32-amino-acid polypeptide reads, in one-letter code: Photosystem II reaction center protein Z (32 aa).

Residues 9 to 31 (FILLGAVTWAILVFIVGSLNSYV) form a helical membrane-spanning segment.

This sequence belongs to the PsbZ family. In terms of assembly, PSII is composed of 1 copy each of membrane proteins PsbA, PsbB, PsbC, PsbD, PsbE, PsbF, PsbH, PsbI, PsbJ, PsbK, PsbL, PsbM, PsbT, PsbY, PsbZ, Psb30/Ycf12, at least 3 peripheral proteins of the oxygen-evolving complex and a large number of cofactors. It forms dimeric complexes.

It is found in the plastid. Its subcellular location is the chloroplast thylakoid membrane. Functionally, may control the interaction of photosystem II (PSII) cores with the light-harvesting antenna, regulates electron flow through the 2 photosystem reaction centers. PSII is a light-driven water plastoquinone oxidoreductase, using light energy to abstract electrons from H(2)O, generating a proton gradient subsequently used for ATP formation. The polypeptide is Photosystem II reaction center protein Z (Euglena stellata).